The following is a 161-amino-acid chain: Phosphopantetheine adenylyltransferase (161 aa).

Thr-9 is a binding site for substrate. Residues 9–10 and His-17 contribute to the ATP site; that span reads TF. Positions 41, 73, and 87 each coordinate substrate. Residues 88–90, Glu-98, and 123–129 each bind ATP; these read GLR and YQFISGT.

Belongs to the bacterial CoaD family. As to quaternary structure, homohexamer. Mg(2+) serves as cofactor.

It localises to the cytoplasm. It catalyses the reaction (R)-4'-phosphopantetheine + ATP + H(+) = 3'-dephospho-CoA + diphosphate. It participates in cofactor biosynthesis; coenzyme A biosynthesis; CoA from (R)-pantothenate: step 4/5. In terms of biological role, reversibly transfers an adenylyl group from ATP to 4'-phosphopantetheine, yielding dephospho-CoA (dPCoA) and pyrophosphate. In Janthinobacterium sp. (strain Marseille) (Minibacterium massiliensis), this protein is Phosphopantetheine adenylyltransferase.